A 228-amino-acid polypeptide reads, in one-letter code: uncharacterized protein (228 aa).

Transmembrane regions (helical) follow at residues 14–34 (GWYI…MWLI), 53–73 (FLII…VLIV), 108–128 (GLTF…FFWL), 148–168 (AVKM…PIFF), 178–198 (TIIS…GFSI), and 200–220 (SVVY…YMAI).

The protein localises to the cell membrane. This is an uncharacterized protein from Bacillus subtilis (strain 168).